Reading from the N-terminus, the 295-residue chain is Nucleotide-binding protein YjiE (295 aa).

12 to 19 is an ATP binding site; it reads GMSGAGKT. 63–66 is a binding site for GTP; it reads DMRS.

Belongs to the RapZ-like family.

Its function is as follows. Displays ATPase and GTPase activities. The chain is Nucleotide-binding protein YjiE (yjiE) from Lactococcus lactis subsp. lactis (strain IL1403) (Streptococcus lactis).